Reading from the N-terminus, the 60-residue chain is Cytochrome c oxidase subunit 9, mitochondrial (60 aa).

Residues 1-18 (MSAIAPITGSLKKRIMKD) lie on the Mitochondrial matrix side of the membrane. Residues 19 to 37 (IAVGMGLGTVLGSYWWWGF) form a helical membrane-spanning segment. The Mitochondrial intermembrane portion of the chain corresponds to 38 to 57 (HKPKIAARENYYTQLAEQKA). A propeptide spans 58-60 (AEE) (removed in mature form).

The protein belongs to the fungal cytochrome c oxidase subunit 7a family. Component of the cytochrome c oxidase (complex IV, CIV), a multisubunit enzyme composed of a catalytic core of 3 subunits and several supernumerary subunits. The complex exists as a monomer or a dimer and forms supercomplexes (SCs) in the inner mitochondrial membrane with ubiquinol-cytochrome c oxidoreductase (cytochrome b-c1 complex, complex III, CIII).

The protein resides in the mitochondrion inner membrane. Its pathway is energy metabolism; oxidative phosphorylation. Functionally, component of the cytochrome c oxidase, the last enzyme in the mitochondrial electron transport chain which drives oxidative phosphorylation. The respiratory chain contains 3 multisubunit complexes succinate dehydrogenase (complex II, CII), ubiquinol-cytochrome c oxidoreductase (cytochrome b-c1 complex, complex III, CIII) and cytochrome c oxidase (complex IV, CIV), that cooperate to transfer electrons derived from NADH and succinate to molecular oxygen, creating an electrochemical gradient over the inner membrane that drives transmembrane transport and the ATP synthase. Cytochrome c oxidase is the component of the respiratory chain that catalyzes the reduction of oxygen to water. Electrons originating from reduced cytochrome c in the intermembrane space (IMS) are transferred via the dinuclear copper A center (CU(A)) of subunit 2 and heme A of subunit 1 to the active site in subunit 1, a binuclear center (BNC) formed by heme A3 and copper B (CU(B)). The BNC reduces molecular oxygen to 2 water molecules using 4 electrons from cytochrome c in the IMS and 4 protons from the mitochondrial matrix. In Eremothecium gossypii (strain ATCC 10895 / CBS 109.51 / FGSC 9923 / NRRL Y-1056) (Yeast), this protein is Cytochrome c oxidase subunit 9, mitochondrial (COX9).